We begin with the raw amino-acid sequence, 1203 residues long: DNA-directed RNA polymerase subunit beta (1203 aa).

Residues 1174-1195 are compositionally biased toward basic and acidic residues; the sequence is AAQEAKAAFEAEEAEKATKAEA. The segment at 1174–1203 is disordered; it reads AAQEAKAAFEAEEAEKATKAEATEEAAEQE.

It belongs to the RNA polymerase beta chain family. The RNAP catalytic core consists of 2 alpha, 1 beta, 1 beta' and 1 omega subunit. When a sigma factor is associated with the core the holoenzyme is formed, which can initiate transcription.

The enzyme catalyses RNA(n) + a ribonucleoside 5'-triphosphate = RNA(n+1) + diphosphate. Its function is as follows. DNA-dependent RNA polymerase catalyzes the transcription of DNA into RNA using the four ribonucleoside triphosphates as substrates. The sequence is that of DNA-directed RNA polymerase subunit beta from Streptococcus pneumoniae serotype 19F (strain G54).